Here is a 507-residue protein sequence, read N- to C-terminus: Histidine ammonia-lyase (507 aa).

The segment at residues 141–143 (ASG) is a cross-link (5-imidazolinone (Ala-Gly)). Ser-142 carries the post-translational modification 2,3-didehydroalanine (Ser).

This sequence belongs to the PAL/histidase family. In terms of processing, contains an active site 4-methylidene-imidazol-5-one (MIO), which is formed autocatalytically by cyclization and dehydration of residues Ala-Ser-Gly.

It localises to the cytoplasm. It carries out the reaction L-histidine = trans-urocanate + NH4(+). Its pathway is amino-acid degradation; L-histidine degradation into L-glutamate; N-formimidoyl-L-glutamate from L-histidine: step 1/3. The sequence is that of Histidine ammonia-lyase from Burkholderia lata (strain ATCC 17760 / DSM 23089 / LMG 22485 / NCIMB 9086 / R18194 / 383).